A 255-amino-acid chain; its full sequence is Type III pantothenate kinase (255 aa).

Position 7–14 (7–14) interacts with ATP; that stretch reads DVGNTRLK. Residues Y96 and 103-106 contribute to the substrate site; that span reads GADR. Catalysis depends on D105, which acts as the Proton acceptor. T133 provides a ligand contact to ATP. T183 lines the substrate pocket.

It belongs to the type III pantothenate kinase family. As to quaternary structure, homodimer. Requires NH4(+) as cofactor. It depends on K(+) as a cofactor.

It localises to the cytoplasm. The catalysed reaction is (R)-pantothenate + ATP = (R)-4'-phosphopantothenate + ADP + H(+). It functions in the pathway cofactor biosynthesis; coenzyme A biosynthesis; CoA from (R)-pantothenate: step 1/5. Functionally, catalyzes the phosphorylation of pantothenate (Pan), the first step in CoA biosynthesis. In Albidiferax ferrireducens (strain ATCC BAA-621 / DSM 15236 / T118) (Rhodoferax ferrireducens), this protein is Type III pantothenate kinase.